The following is a 277-amino-acid chain: Large ribosomal subunit protein uL2 (277 aa).

A disordered region spans residues 223 to 277 (VTMNPVDHPHGGGEGRTSGGRHPVTPWGKPTKGMKTRSNKATDKFIVTSRHKRKK).

It belongs to the universal ribosomal protein uL2 family. In terms of assembly, part of the 50S ribosomal subunit. Forms a bridge to the 30S subunit in the 70S ribosome.

Functionally, one of the primary rRNA binding proteins. Required for association of the 30S and 50S subunits to form the 70S ribosome, for tRNA binding and peptide bond formation. It has been suggested to have peptidyltransferase activity; this is somewhat controversial. Makes several contacts with the 16S rRNA in the 70S ribosome. This is Large ribosomal subunit protein uL2 from Azorhizobium caulinodans (strain ATCC 43989 / DSM 5975 / JCM 20966 / LMG 6465 / NBRC 14845 / NCIMB 13405 / ORS 571).